A 261-amino-acid polypeptide reads, in one-letter code: MPQNEYIERWTKQHGKRLDHDERVRKREARQSHQQSKDAQNLRGLRAKLYQQKRHAEKIQMRKRIKAQEEKNVKSSAPSEPSKTPLPQYLLDRSEATNAKALSSAIKDKRAEKAAKFAVPLPKVKGISEEEMFKVVNTGKKTHKKSWKRMITKPTFVGNDFTRRPVKYERFIRPMGLRYKKANVTHPEMAVTVQLPILSVKKNPQNPLYTQLGVLTKGTVIEVNVSELGIVTAGGKVAWGKYAQITNTPENDGCVNAVLLV.

The segment covering 1 to 31 has biased composition (basic and acidic residues); the sequence is MPQNEYIERWTKQHGKRLDHDERVRKREARQ. A disordered region spans residues 1 to 87; sequence MPQNEYIERW…PSEPSKTPLP (87 aa). 2 consecutive short sequence motifs (nuclear localization signal) follow at residues 15–22 and 52–59; these read GKRLDHDE and QKRHAEKI. Positions 51 to 65 are enriched in basic residues; the sequence is QQKRHAEKIQMRKRI.

The protein belongs to the eukaryotic ribosomal protein eS8 family. Ribosome biogenesis protein NSA2 subfamily. In terms of assembly, component of the pre-66S ribosomal particle. Interacts with nop7 and rrp1. Interacts with rsa4 (via WD repeats).

It localises to the nucleus. The protein localises to the nucleolus. Involved in the biogenesis of the 60S ribosomal subunit. May play a part in the quality control of pre-60S particles. This chain is Ribosome biogenesis protein nsa2 (nsa2), found in Emericella nidulans (strain FGSC A4 / ATCC 38163 / CBS 112.46 / NRRL 194 / M139) (Aspergillus nidulans).